The chain runs to 2850 residues: Hornerin (2850 aa).

The tract at residues 1–81 (MPKLLQGVIT…TEYLLMIFKL (81 aa)) is S-100-like. 2 consecutive EF-hand domains span residues 13-48 (DVFYQYATQHGEYDTLNKAELKELLENEFHQILKNP) and 49-84 (NDPDTVDIILQSLDRDHNKKVDFTEYLLMIFKLVQA). The Ca(2+) site is built by T27, E32, D62, D64, N66, K68, and E73. Repeat copies occupy residues 97-187 (SGSK…SDSH), 188-278 (QSSG…SSSG), 279-369 (SSSS…SGSG), 370-460 (HSSS…SGSG), 474-566 (HSSG…YGSG), 593-683 (QSSG…SGSG), 685-747 (SSSN…SSSG), 748-836 (LSSS…SASG), 839-875 (SSQGRHGSTSGQSSSSGQHDSSSGQSSSYGQHESASH), 876-965 (HASG…SRSG), 966-1004 (QSSRSEQHGSSSGSSSSYGQHGSGSRQSLGHGQHGSGSG), 1007-1097 (PSPS…ASSG), and 1098-1188 (QSSS…SGSG). Residues 100-110 (KLRDDTHQHQE) are compositionally biased toward basic and acidic residues. Disordered stretches follow at residues 100-154 (KLRD…GTES) and 166-2817 (SGQH…KGGS). Residues 125-144 (SSFSHSSWSAGENDSYSRNV) are compositionally biased toward polar residues. Low complexity-rich tracts occupy residues 167–192 (GQHNSYSGQSSSYGEQNSDSHQSSGR) and 226–248 (GQSSGFSQHKSSSGQSSGYSQHG). Gly residues predominate over residues 249–259 (SGSGHSSGYGQ). Low complexity-rich tracts occupy residues 276 to 308 (SSGSSSSYGQHGSGSRQSLGHGRQGSGSRQSPS) and 317 to 421 (GHSS…SGSG). Residues 422-433 (QSPGHGQRGSGS) show a composition bias toward gly residues. Composition is skewed to low complexity over residues 449 to 465 (SSSSGPYVSGSGYSSGF) and 473 to 482 (EHSSGYTQHG). Residues 483-493 (SGSGHSSGHGQ) show a composition bias toward gly residues. Low complexity-rich tracts occupy residues 494-529 (HGSRSGQSSRGERQGSSAGSSSSYGQHGSGSRQSLG), 555-661 (SSSY…QSPS), 670-724 (GHSS…SHSS), 732-765 (RSGQSSRSEQHGSSSGLSSSYGQHGSGSHQSSGH), 782-806 (GSSSGHSSSHGQHGSGTSCSSSCGH), and 818-871 (GQHE…GQHE). A phosphoserine mark is found at S659 and S661. Gly residues predominate over residues 884–900 (GSGSGQSPGHGQRGSGS). The residue at position 890 (S890) is a Phosphoserine. Low complexity-rich tracts occupy residues 901–921 (GQSPSYGRHGSGSGRSSSSGR) and 931–996 (GFGH…SLGH). Residues S993 and S1008 each carry the phosphoserine modification. 2 stretches are compositionally biased toward low complexity: residues 1019 to 1050 (GQSSSYGPYRSGSGWSSSRGPYESGSGHSSGL) and 1057 to 1115 (SGQS…SSGY). Positions 1116-1132 (GRQGSGSGQSPGHGQRG) are enriched in gly residues. Low complexity-rich tracts occupy residues 1133–1156 (SGSRQSPSYGRHGSGSGRSSSSGQ) and 1166–1184 (GFGHHESSSGQSSSYSQHG). Residues 1185–1195 (SGSGHSSGYGQ) show a composition bias toward gly residues. An Omega-N-methylarginine modification is found at R1205. Composition is skewed to low complexity over residues 1211–1232 (SSSGSSSHYGQHGSGSRQSSGH) and 1253–1276 (GHSSSHGQHGSGSGRSSSRGPYES). Copy 14 of the repeat occupies 1215–1305 (SSSHYGQHGS…AYSQHGSGSG (91 aa)). The segment covering 1280–1301 (HSSVFGQHESGSGHSSAYSQHG) has biased composition (polar residues). Composition is skewed to low complexity over residues 1309–1322 (SQGQHGSTSGQSST), 1331–1349 (GQSSSYGHRGSGSSQSSGY), 1370–1390 (GHSSSYGQHGSGSGWSSSSGR), 1400–1438 (GFGHHESSSWQSSGCTQHGSGSGHSSSYEQHGSRSGQSS), and 1445–1466 (SSSGSSSSYGQHGSGSRQSLGH). 16 consecutive repeat copies span residues 1332–1422 (QSSS…SGSG), 1423–1474 (HSSS…SGSG), 1477–1567 (PSPS…ASSG), 1568–1658 (QSSS…SGSG), 1685–1775 (SSSR…SGSG), 1802–1892 (QSSS…SGSG), 1893–1944 (HSSS…SGSG), 1947–2037 (PSPS…ASSG), 2038–2128 (QSSS…SGSG), 2155–2245 (SSSR…SGSG), 2272–2362 (QSSS…SGSG), 2363–2414 (HSSS…SGSG), 2417–2507 (PSPS…ASSG), 2508–2598 (QSSS…SGSG), 2625–2715 (SSSH…SGSG), and 2716–2806 (HFCS…SGSG). Phosphoserine occurs at positions 1463 and 1478. Composition is skewed to low complexity over residues 1489-1520 (GQSSSYSPYGSGSGWSSSRGPYESGSSHSSGL) and 1527-1585 (SGQS…SSGY). Positions 1586–1602 (GRQGSGSGQSPGHGQRG) are enriched in gly residues. Low complexity-rich tracts occupy residues 1603-1626 (SGSRQSPSYGRHGSGSGRSSSSGQ) and 1636-1654 (GFGHHESSSGQSSSYSQHG). Residues 1655-1665 (SGSGHSSGYGQ) are compositionally biased toward gly residues. Residues 1682-1702 (SSRSSSRYGQHGSGSRQSSGH) show a composition bias toward low complexity. Phosphoserine is present on residues S1712 and S1714. Residues 1723–1746 (GHSSSHGQHGSGSGRSSSRGPYES) are compositionally biased toward low complexity. Polar residues predominate over residues 1750-1771 (HSSVFGQHESGSGHSSAYSQHG). 3 stretches are compositionally biased toward low complexity: residues 1779–1831 (SQGQ…QSPS), 1840–1860 (GHSSSYGQHGSGSGWSSSSGR), and 1870–1936 (GFGH…SLGH). Phosphoserine occurs at positions 1829 and 1831. Phosphoserine occurs at positions 1933 and 1948. 2 stretches are compositionally biased toward low complexity: residues 1959–1990 (GQSSSYGPYGSGSGWSSSRGPYESGSGHSSGL) and 1997–2055 (SGQS…SSGY). Positions 2056 to 2072 (GRQGSGSGQSPGHGQRG) are enriched in gly residues. 2 stretches are compositionally biased toward low complexity: residues 2073 to 2096 (SGSRQSPSYGRHGSGSGRSSSSGQ) and 2106 to 2124 (GFGHHESSSGQSSSYSQHG). A compositionally biased stretch (gly residues) spans 2125 to 2135 (SGSGHSSGYGQ). Composition is skewed to low complexity over residues 2151–2172 (SSSGSSSRYGQHGSGSRQSSGH) and 2193–2216 (GHSSSHGQHGSGSGRSSSRGPYES). A compositionally biased stretch (polar residues) spans 2220–2241 (HSSVFGQHESGSGHSSAYSQHG). 4 stretches are compositionally biased toward low complexity: residues 2249-2301 (SQGQ…QSPS), 2310-2330 (GHSSSYGQHGSGSGWSSSSGR), 2340-2378 (GFGHHESSSWQSSGYTQHGSGSGHSSSYEQHGSRSGQSS), and 2385-2406 (SSSGSSSSYGQHGSGSRQSLGH). A phosphoserine mark is found at S2299 and S2301. Phosphoserine is present on residues S2403 and S2418. Composition is skewed to low complexity over residues 2429–2460 (GQSSSYSPYGSGSGWSSSRGPYESGSGHSSGL) and 2467–2525 (SGQS…SSGY). Gly residues predominate over residues 2526 to 2542 (GRQGSGSGQSPGHGQRG). Low complexity-rich tracts occupy residues 2543–2566 (SGSRQSPSYGRHGSGSGRSSSSGQ) and 2576–2594 (GFGHHESSSGQSSSYSQHG). Positions 2595-2605 (SGSGHSSGYGQ) are enriched in gly residues. The segment covering 2621-2642 (SSSGSSSHYGQHGSGSRQSSGH) has biased composition (low complexity). S2652 and S2654 each carry phosphoserine. Over residues 2663 to 2682 (GHSSSHGQHGSGSGRSSSRG) the composition is skewed to low complexity. The segment covering 2698-2711 (ESGSGHSSAYSQHG) has biased composition (polar residues). Composition is skewed to low complexity over residues 2719–2732 (SQGQHGSTSGQSST), 2741–2759 (GQSSSYGHRGSGSSQSSGY), and 2795–2816 (SSGYSQHGSGSGQDGYSYCKGG).

This sequence belongs to the S100-fused protein family. The protein in the N-terminal section; belongs to the S-100 family. Processed during the process of epidermal differentiation. Post-translationally, forms covalent cross-links mediated by transglutaminase TGM3, between glutamine and the epsilon-amino group of lysine residues (in vitro). As to expression, expressed in cornified epidermis, psoriatic and regenerating skin after wounding. Found in the upper granular layer and in the entire cornified layer of epidermis.

The protein resides in the cytoplasmic granule. Functionally, component of the epidermal cornified cell envelopes. This Homo sapiens (Human) protein is Hornerin (HRNR).